The sequence spans 113 residues: Large ribosomal subunit protein uL22 (113 aa).

It belongs to the universal ribosomal protein uL22 family. Part of the 50S ribosomal subunit.

In terms of biological role, this protein binds specifically to 23S rRNA; its binding is stimulated by other ribosomal proteins, e.g. L4, L17, and L20. It is important during the early stages of 50S assembly. It makes multiple contacts with different domains of the 23S rRNA in the assembled 50S subunit and ribosome. The globular domain of the protein is located near the polypeptide exit tunnel on the outside of the subunit, while an extended beta-hairpin is found that lines the wall of the exit tunnel in the center of the 70S ribosome. This chain is Large ribosomal subunit protein uL22, found in Xylella fastidiosa (strain M12).